The chain runs to 417 residues: Phosphoglycerate kinase 1 (417 aa).

N-acetylserine is present on serine 2. Phosphoserine occurs at positions 2 and 4. At lysine 6 the chain carries N6-succinyllysine. Residue lysine 11 is modified to N6-acetyllysine. Positions 23, 24, 25, 26, 38, and 39 each coordinate (2R)-3-phosphoglycerate. Residues 38–43 form a mitochondrial targeting region exposed following cis-trans isomerization by PIN1 and recognized by the TOM complex for mitochondrial translocation of the protein region; that stretch reads QRIKAA. Position 48 is an N6-acetyllysine; alternate (lysine 48). At lysine 48 the chain carries N6-succinyllysine; alternate. 4 residues coordinate (2R)-3-phosphoglycerate: serine 62, histidine 63, glycine 65, and arginine 66. The residue at position 75 (lysine 75) is an N6-acetyllysine. Phosphotyrosine is present on tyrosine 76. An N6-acetyllysine mark is found at lysine 86 and lysine 91. An N6-acetyllysine; alternate modification is found at lysine 97. Lysine 97 carries the post-translational modification N6-(2-hydroxyisobutyryl)lysine; alternate. The (2R)-3-phosphoglycerate site is built by leucine 122 and arginine 123. Lysine 131 bears the N6-acetyllysine; alternate mark. The residue at position 131 (lysine 131) is an N6-malonyllysine; alternate. Lysine 146 bears the N6-acetyllysine mark. (2R)-3-phosphoglycerate-binding residues include histidine 170 and arginine 171. The residue at position 191 (lysine 191) is an N6-succinyllysine. Residue tyrosine 196 is modified to Phosphotyrosine. Lysine 199 is modified (N6-acetyllysine). Serine 203 is subject to Phosphoserine; by MAPK1. ADP is bound at residue glycine 214. Glycine 214 serves as a coordination point for CDP. 2 residues coordinate AMP: alanine 215 and lysine 216. ATP is bound at residue alanine 215. Alanine 215 contributes to the Mg(2+) binding site. Lysine 216 is modified (N6-(2-hydroxyisobutyryl)lysine). Residues alanine 218 and aspartate 219 each contribute to the Mg(2+) site. Aspartate 219 contacts CDP. Residue lysine 220 participates in AMP binding. Lysine 220 is an ATP binding site. N6-(2-hydroxyisobutyryl)lysine is present on lysine 220. Glycine 238 is a binding site for ADP. Glycine 238 provides a ligand contact to CDP. Glycine 239 contributes to the AMP binding site. ATP is bound at residue glycine 239. 2 positions are modified to N6-acetyllysine: lysine 267 and lysine 291. Glycine 313 contributes to the AMP binding site. Glycine 313 serves as a coordination point for ATP. At lysine 323 the chain carries N6-(2-hydroxyisobutyryl)lysine. CDP is bound by residues glycine 338, valine 340, and phenylalanine 343. Phenylalanine 343 contacts ADP. Residue glutamate 344 participates in AMP binding. Position 344 (glutamate 344) interacts with ATP. Lysine 361 carries the post-translational modification N6-acetyllysine. Positions 375 and 376 each coordinate ATP. Residue aspartate 375 participates in Mg(2+) binding.

It belongs to the phosphoglycerate kinase family. As to quaternary structure, monomer. Interacts with kinase MAPK1/ERK2; the interaction is direct, occurs under hypoxic conditions, and promotes its interaction with PIN1. Interacts with peptidyl-prolyl cis-trans isomerase PIN1; the interaction is direct, occurs under hypoxic conditions, and targets the protein to the mitochondrion by promoting interactions with the TOM complex. Interacts with mitochondrial circRNA mcPGK1 (via its 2nd stem-loop); the interaction is direct and targets the protein to the mitochondrion by promoting interactions with the TOM complex. Interacts with pyruvate dehydrogenase kinase PDK1; the interaction is direct, occurs under hypoxic conditions and leads to PDK1-mediated inhibition of pyruvate dehydrogenase complex activity. Mg(2+) serves as cofactor. Phosphorylated at Ser-203 by MAPK1/ERK2 under hypoxic conditions, which promotes its mitochondrial targeting. Mainly expressed in spermatogonia. Localized on the principle piece in the sperm (at protein level). Expression significantly decreased in the testis of elderly men.

It is found in the cytoplasm. The protein resides in the cytosol. Its subcellular location is the mitochondrion matrix. It carries out the reaction (2R)-3-phosphoglycerate + ATP = (2R)-3-phospho-glyceroyl phosphate + ADP. The catalysed reaction is L-seryl-[protein] + ATP = O-phospho-L-seryl-[protein] + ADP + H(+). It participates in carbohydrate degradation; glycolysis; pyruvate from D-glyceraldehyde 3-phosphate: step 2/5. Specifically inhibited by heterocyclic compound CBR-470-0. Its function is as follows. Catalyzes one of the two ATP producing reactions in the glycolytic pathway via the reversible conversion of 1,3-diphosphoglycerate to 3-phosphoglycerate. Both L- and D- forms of purine and pyrimidine nucleotides can be used as substrates, but the activity is much lower on pyrimidines. In addition to its role as a glycolytic enzyme, it seems that PGK1 acts as a polymerase alpha cofactor protein (primer recognition protein). Acts as a protein kinase when localized to the mitochondrion where it phosphorylates pyruvate dehydrogenase kinase PDK1 to inhibit pyruvate dehydrogenase complex activity and suppress the formation of acetyl-coenzyme A from pyruvate, and consequently inhibit oxidative phosphorylation and promote glycolysis. May play a role in sperm motility. This Homo sapiens (Human) protein is Phosphoglycerate kinase 1 (PGK1).